A 264-amino-acid chain; its full sequence is 3-methyl-2-oxobutanoate hydroxymethyltransferase (264 aa).

Aspartate 45 and aspartate 84 together coordinate Mg(2+). Residues aspartate 45–serine 46, aspartate 84, and lysine 112 each bind 3-methyl-2-oxobutanoate. Glutamate 114 contacts Mg(2+). The active-site Proton acceptor is the glutamate 181.

Belongs to the PanB family. In terms of assembly, homodecamer; pentamer of dimers. Mg(2+) serves as cofactor.

The protein resides in the cytoplasm. The enzyme catalyses 3-methyl-2-oxobutanoate + (6R)-5,10-methylene-5,6,7,8-tetrahydrofolate + H2O = 2-dehydropantoate + (6S)-5,6,7,8-tetrahydrofolate. The protein operates within cofactor biosynthesis; (R)-pantothenate biosynthesis; (R)-pantoate from 3-methyl-2-oxobutanoate: step 1/2. Its function is as follows. Catalyzes the reversible reaction in which hydroxymethyl group from 5,10-methylenetetrahydrofolate is transferred onto alpha-ketoisovalerate to form ketopantoate. The protein is 3-methyl-2-oxobutanoate hydroxymethyltransferase of Aeromonas salmonicida (strain A449).